We begin with the raw amino-acid sequence, 270 residues long: Orotidine 5'-phosphate decarboxylase (270 aa).

Lys-89 serves as the catalytic Proton donor.

It belongs to the OMP decarboxylase family. Type 2 subfamily.

It catalyses the reaction orotidine 5'-phosphate + H(+) = UMP + CO2. It functions in the pathway pyrimidine metabolism; UMP biosynthesis via de novo pathway; UMP from orotate: step 2/2. The chain is Orotidine 5'-phosphate decarboxylase from Dehalococcoides mccartyi (strain CBDB1).